The following is a 157-amino-acid chain: Cyclic pyranopterin monophosphate synthase (157 aa).

Substrate is bound by residues 74–76 and 112–113; these read MCH and ME. D127 is an active-site residue.

The protein belongs to the MoaC family. In terms of assembly, homohexamer; trimer of dimers.

It carries out the reaction (8S)-3',8-cyclo-7,8-dihydroguanosine 5'-triphosphate = cyclic pyranopterin phosphate + diphosphate. Its pathway is cofactor biosynthesis; molybdopterin biosynthesis. Catalyzes the conversion of (8S)-3',8-cyclo-7,8-dihydroguanosine 5'-triphosphate to cyclic pyranopterin monophosphate (cPMP). In Sulfurovum sp. (strain NBC37-1), this protein is Cyclic pyranopterin monophosphate synthase.